We begin with the raw amino-acid sequence, 236 residues long: MQHNTNVDPQEIAKFERMAETWWDLNGEFKPLHLLNPLRLNYIDQTAGGIFGKKVLDVGCGGGILSESMARIGAEVDGLDMGEEPLEVARLHALETGVNITYVKNTAEAHSQDHQGYYDVVTCMEMLEHVPNPQSVIKACCDMVKPGGFVFFSTINRNLRSYVETILGAEYLLKMLPVGTHDHNKFIKPSELIELVDNTDLICKDAVGITYNPLTGIFKYTPRVDVNYMIATQKVD.

S-adenosyl-L-methionine is bound by residues R39, G59, D80, and M124.

The protein belongs to the methyltransferase superfamily. UbiG/COQ3 family.

It carries out the reaction a 3-demethylubiquinol + S-adenosyl-L-methionine = a ubiquinol + S-adenosyl-L-homocysteine + H(+). It catalyses the reaction a 3-(all-trans-polyprenyl)benzene-1,2-diol + S-adenosyl-L-methionine = a 2-methoxy-6-(all-trans-polyprenyl)phenol + S-adenosyl-L-homocysteine + H(+). It functions in the pathway cofactor biosynthesis; ubiquinone biosynthesis. In terms of biological role, O-methyltransferase that catalyzes the 2 O-methylation steps in the ubiquinone biosynthetic pathway. The polypeptide is Ubiquinone biosynthesis O-methyltransferase (Shewanella putrefaciens (strain CN-32 / ATCC BAA-453)).